Reading from the N-terminus, the 104-residue chain is Defensin-2 (104 aa).

The first 19 residues, 1-19, serve as a signal peptide directing secretion; the sequence is MKFFVLFAILIAIVHASCA. Intrachain disulfides connect Cys64–Cys95, Cys81–Cys100, and Cys85–Cys102.

The protein belongs to the invertebrate defensin family. Type 1 subfamily. As to expression, low expression in head and thorax.

The protein localises to the secreted. In terms of biological role, antibacterial peptide mostly active against Gram-positive bacteria. The chain is Defensin-2 from Apis mellifera (Honeybee).